A 212-amino-acid polypeptide reads, in one-letter code: ATP-dependent Clp protease proteolytic subunit (212 aa).

Ser114 functions as the Nucleophile in the catalytic mechanism. His139 is an active-site residue.

This sequence belongs to the peptidase S14 family. As to quaternary structure, fourteen ClpP subunits assemble into 2 heptameric rings which stack back to back to give a disk-like structure with a central cavity, resembling the structure of eukaryotic proteasomes.

The protein resides in the cytoplasm. The catalysed reaction is Hydrolysis of proteins to small peptides in the presence of ATP and magnesium. alpha-casein is the usual test substrate. In the absence of ATP, only oligopeptides shorter than five residues are hydrolyzed (such as succinyl-Leu-Tyr-|-NHMec, and Leu-Tyr-Leu-|-Tyr-Trp, in which cleavage of the -Tyr-|-Leu- and -Tyr-|-Trp bonds also occurs).. Functionally, cleaves peptides in various proteins in a process that requires ATP hydrolysis. Has a chymotrypsin-like activity. Plays a major role in the degradation of misfolded proteins. The sequence is that of ATP-dependent Clp protease proteolytic subunit from Laribacter hongkongensis (strain HLHK9).